The sequence spans 102 residues: Large ribosomal subunit protein uL23c (102 aa).

This sequence belongs to the universal ribosomal protein uL23 family. As to quaternary structure, part of the 50S ribosomal subunit.

The protein localises to the plastid. The protein resides in the chloroplast. Functionally, binds to 23S rRNA. This chain is Large ribosomal subunit protein uL23c (rpl23), found in Phaeodactylum tricornutum (strain CCAP 1055/1).